A 1922-amino-acid polypeptide reads, in one-letter code: Kinesin-related protein 4 (1922 aa).

The region spanning 22–343 (KIKVAIRVRP…LQFAKRAKRV (322 aa)) is the Kinesin motor domain. ATP is bound at residue 101–108 (GQTSSGKT). A disordered region spans residues 448-538 (QKIKKIKNSE…DDEFKDNLNL (91 aa)). The span at 456-468 (SENNISSSSSNSS) shows a compositional bias: low complexity. Composition is skewed to acidic residues over residues 469–480 (GEEDDDDKDDEN) and 488–532 (DKDD…DDEF). A coiled-coil region spans residues 562–1712 (QVKVKREDLD…ELESTKQKNL (1151 aa)). A disordered region spans residues 1887–1922 (TSTDNLTTTSTSLKSKSSSNGENKENQNNNIIIKNN).

This sequence belongs to the TRAFAC class myosin-kinesin ATPase superfamily. Kinesin family.

The protein resides in the cytoplasm. It is found in the cytoskeleton. Microtubule-associated force-producing protein that plays a role in organelle transport. Its motor activity is directed toward the microtubule's plus end. Cooperates with dynein in organizing spindle assembly during cell division. In Dictyostelium discoideum (Social amoeba), this protein is Kinesin-related protein 4 (kif4).